A 284-amino-acid polypeptide reads, in one-letter code: Proteasome subunit beta (284 aa).

Residues 1–56 constitute a propeptide, removed in mature form; by autocatalysis; the sequence is MSPMESSSTRFPGQALPAAYLTPGSSSFTDFLRVAAPELMPGSRPVPDGAVEAPHG. Thr57 acts as the Nucleophile in catalysis.

The protein belongs to the peptidase T1B family. In terms of assembly, the 20S proteasome core is composed of 14 alpha and 14 beta subunits that assemble into four stacked heptameric rings, resulting in a barrel-shaped structure. The two inner rings, each composed of seven catalytic beta subunits, are sandwiched by two outer rings, each composed of seven alpha subunits. The catalytic chamber with the active sites is on the inside of the barrel. Has a gated structure, the ends of the cylinder being occluded by the N-termini of the alpha-subunits. Is capped by the proteasome-associated ATPase, ARC.

It localises to the cytoplasm. It carries out the reaction Cleavage of peptide bonds with very broad specificity.. The protein operates within protein degradation; proteasomal Pup-dependent pathway. Its activity is regulated as follows. The formation of the proteasomal ATPase ARC-20S proteasome complex, likely via the docking of the C-termini of ARC into the intersubunit pockets in the alpha-rings, may trigger opening of the gate for substrate entry. Interconversion between the open-gate and close-gate conformations leads to a dynamic regulation of the 20S proteasome proteolysis activity. Component of the proteasome core, a large protease complex with broad specificity involved in protein degradation. This chain is Proteasome subunit beta, found in Saccharopolyspora erythraea (strain ATCC 11635 / DSM 40517 / JCM 4748 / NBRC 13426 / NCIMB 8594 / NRRL 2338).